We begin with the raw amino-acid sequence, 34 residues long: Phallacidin proprotein 1 (34 aa).

A propeptide spanning residues 1 to 10 (MSDINATRLP) is cleaved from the precursor. The cyclopeptide (Ala-Pro) cross-link spans 11-17 (AWLVDCP). A cross-link (2'-cysteinyl-6'-hydroxytryptophan sulfoxide (Trp-Cys)) is located at residues 12–16 (WLVDC). The propeptide occupies 18–34 (CVGDDVNRLLTRGESLC).

Belongs to the MSDIN fungal toxin family. In terms of processing, processed by the macrocyclase-peptidase enzyme POPB to yield a toxic cyclic heptapeptide. POPB first removes 10 residues from the N-terminus. Conformational trapping of the remaining peptide forces the enzyme to release this intermediate rather than proceed to macrocyclization. The enzyme rebinds the remaining peptide in a different conformation and catalyzes macrocyclization of the N-terminal 7 residues.

Its function is as follows. Major toxin that belongs to the bicyclic heptapeptides called phallotoxins. Although structurally related to amatoxins, phallotoxins have a different mode of action, which is the stabilization of F-actin. Phallotoxins are poisonous when administered parenterally, but not orally because of poor absorption. This chain is Phallacidin proprotein 1, found in Amanita bisporigera (Destroying angel).